A 592-amino-acid chain; its full sequence is Protein kinase C zeta type (592 aa).

The PB1 domain occupies 15-98 (RVRLKAHYGG…EVLIIHVFPS (84 aa)). Residues 79–145 (AFRLVCQGRD…KRFNRGAYCG (67 aa)) form an interaction with SQSTM1 region. The segment at 130-180 (GHLFQAKRFNRGAYCGQCSERIWGLSRQGYRCINCKLLVHKRCHVLVPLTC) adopts a Phorbol-ester/DAG-type zinc-finger fold. Residues 252-518 (FDLIRVIGRG…FSDIKSHAFF (267 aa)) form the Protein kinase domain. ATP is bound by residues 258 to 266 (IGRGSYAKV) and K281. The Proton acceptor role is filled by D376. T410 is modified (phosphothreonine; by PDPK1 and PI3K). Residues 519-590 (RSIDWDLLEK…INPLLLSAEE (72 aa)) form the AGC-kinase C-terminal domain. A Phosphothreonine modification is found at T560. S591 is modified (phosphoserine).

Belongs to the protein kinase superfamily. AGC Ser/Thr protein kinase family. PKC subfamily. In terms of assembly, interacts directly with SQSTM1. Forms a ternary complex with SQSTM1 and KCNAB2. Forms another ternary complex with SQSTM1 and GABRR3. Forms a complex with SQSTM1 and MAP2K5. Interacts with PARD6A, PARD6B and PARD6G. Part of a complex with PARD3, PARD6A or PARD6B or PARD6G and CDC42 or RAC1. Interacts with ADAP1/CENTA1. Interacts (via the protein kinase domain) with WWC1. Forms a tripartite complex with WWC1 and DDR1, but predominantly in the absence of collagen. Interacts with PDPK1 (via N-terminal region). Interacts with WDFY2 (via WD repeats 1-3). Interacts with VAMP2. Forms a complex with WDFY2 and VAMP2. Interacts with APPL1. Interacts with WWC1, WWC2 and WWC3. In terms of processing, CDH5 is required for its phosphorylation at Thr-410. Phosphorylated by protein kinase PDPK1; phosphorylation is inhibited by the apoptotic C-terminal cleavage product of PKN2. Phosphorylation at Thr-410 by PI3K activates the kinase. In terms of tissue distribution, isoform 1: In brain, highly expressed in cerebellar granule neurons and cerebellar astrocytes (at protein level). Expressed at low levels in testes, lung and kidney. Isoform 2: Specifically expressed in brain where it localizes to cerebellar granule neurons (at protein level).

The protein localises to the cytoplasm. It localises to the endosome. The protein resides in the cell junction. It is found in the membrane. It catalyses the reaction L-seryl-[protein] + ATP = O-phospho-L-seryl-[protein] + ADP + H(+). The catalysed reaction is L-threonyl-[protein] + ATP = O-phospho-L-threonyl-[protein] + ADP + H(+). Atypical PKCs (PRKCI and PRKCZ) exhibit an elevated basal enzymatic activity (that may be due to the interaction with SMG1 or SQSTM1) and are not regulated by diacylglycerol, phosphatidylserine, phorbol esters or calcium ions. Two specific sites, Thr-410 (activation loop of the kinase domain) and Thr-560 (turn motif), need to be phosphorylated for its full activation. Phosphatidylinositol 3,4,5-trisphosphate might be a physiological activator. Isoform 2: Constitutively active. Its function is as follows. Calcium- and diacylglycerol-independent serine/threonine-protein kinase that functions in phosphatidylinositol 3-kinase (PI3K) pathway and mitogen-activated protein (MAP) kinase cascade, and is involved in NF-kappa-B activation, mitogenic signaling, cell proliferation, cell polarity, inflammatory response and maintenance of long-term potentiation (LTP). Upon lipopolysaccharide (LPS) treatment in macrophages, or following mitogenic stimuli, functions downstream of PI3K to activate MAP2K1/MEK1-MAPK1/ERK2 signaling cascade independently of RAF1 activation. Required for insulin-dependent activation of AKT3, but may function as an adapter rather than a direct activator. Upon insulin treatment may act as a downstream effector of PI3K and contribute to the activation of translocation of the glucose transporter SLC2A4/GLUT4 and subsequent glucose transport in adipocytes. In EGF-induced cells, binds and activates MAP2K5/MEK5-MAPK7/ERK5 independently of its kinase activity and can activate JUN promoter through MEF2C. Through binding with SQSTM1/p62, functions in interleukin-1 signaling and activation of NF-kappa-B with the specific adapters RIPK1 and TRAF6. Participates in TNF-dependent transactivation of NF-kappa-B by phosphorylating and activating IKBKB kinase, which in turn leads to the degradation of NF-kappa-B inhibitors. In migrating astrocytes, forms a cytoplasmic complex with PARD6A and is recruited by CDC42 to function in the establishment of cell polarity along with the microtubule motor and dynein. In association with FEZ1, stimulates neuronal differentiation in PC12 cells. In the inflammatory response, is required for the T-helper 2 (Th2) differentiation process, including interleukin production, efficient activation of JAK1 and the subsequent phosphorylation and nuclear translocation of STAT6. May be involved in development of allergic airway inflammation (asthma), a process dependent on Th2 immune response. In the NF-kappa-B-mediated inflammatory response, can relieve SETD6-dependent repression of NF-kappa-B target genes by phosphorylating the RELA subunit at 'Ser-311'. Phosphorylates VAMP2 in vitro. Phosphorylates and activates LRRK1, which phosphorylates RAB proteins involved in intracellular trafficking. In terms of biological role, involved in late synaptic long term potentiation phase in CA1 hippocampal cells and long term memory maintenance. The sequence is that of Protein kinase C zeta type (Prkcz) from Mus musculus (Mouse).